The sequence spans 115 residues: Protein Diedel (115 aa).

The N-terminal stretch at 1 to 24 (MASPVVSLLLVGICALAFVHVARS) is a signal peptide. 5 disulfide bridges follow: Cys26–Cys81, Cys27–Cys87, Cys42–Cys55, Cys60–Cys71, and Cys76–Cys83.

The protein belongs to the Diedel family. In terms of tissue distribution, detected in hemolymph (at protein level). Also expressed in the fat body and is probably synthesized in the fat body and secreted into the hemolymph.

It localises to the secreted. Its function is as follows. Cytokine which promotes survival following infection by Sindbis virus by suppressing the immune deficiency pathway. Following infection by the enteropathogenic bacteria E.carotovora limits intestinal stem cells proliferation. When secreted from muscle or adipose tissue, can attenuate age-related intestinal tissue degeneration by inhibiting apoptosis. The polypeptide is Protein Diedel (Drosophila melanogaster (Fruit fly)).